The following is a 271-amino-acid chain: 4-diphosphocytidyl-2-C-methyl-D-erythritol kinase (271 aa).

Residue Lys-17 is part of the active site. 97–107 (PVGSGLGGGSS) serves as a coordination point for ATP. The active site involves Asp-137.

Belongs to the GHMP kinase family. IspE subfamily.

The catalysed reaction is 4-CDP-2-C-methyl-D-erythritol + ATP = 4-CDP-2-C-methyl-D-erythritol 2-phosphate + ADP + H(+). It participates in isoprenoid biosynthesis; isopentenyl diphosphate biosynthesis via DXP pathway; isopentenyl diphosphate from 1-deoxy-D-xylulose 5-phosphate: step 3/6. Catalyzes the phosphorylation of the position 2 hydroxy group of 4-diphosphocytidyl-2C-methyl-D-erythritol. In Thermotoga petrophila (strain ATCC BAA-488 / DSM 13995 / JCM 10881 / RKU-1), this protein is 4-diphosphocytidyl-2-C-methyl-D-erythritol kinase.